Consider the following 250-residue polypeptide: 2,3-bisphosphoglycerate-dependent phosphoglycerate mutase (250 aa).

Residues 10–17, 23–24, R62, 89–92, K100, 116–117, and 185–186 contribute to the substrate site; these read RHGESQWN, TG, ERHY, RR, and GN. H11 functions as the Tele-phosphohistidine intermediate in the catalytic mechanism. Residue E89 is the Proton donor/acceptor of the active site.

The protein belongs to the phosphoglycerate mutase family. BPG-dependent PGAM subfamily. In terms of assembly, homodimer.

It catalyses the reaction (2R)-2-phosphoglycerate = (2R)-3-phosphoglycerate. It functions in the pathway carbohydrate degradation; glycolysis; pyruvate from D-glyceraldehyde 3-phosphate: step 3/5. Catalyzes the interconversion of 2-phosphoglycerate and 3-phosphoglycerate. The sequence is that of 2,3-bisphosphoglycerate-dependent phosphoglycerate mutase from Salmonella agona (strain SL483).